A 259-amino-acid chain; its full sequence is Emerin (259 aa).

An N-acetylmethionine modification is found at M1. The LEM domain maps to 1 to 45; the sequence is MDDYAVLSDTELAAVLRQYNIPHGPIVGSTRKLYEKKIFEYETQR. S8, S29, S54, S72, S88, S99, S141, and S142 each carry phosphoserine. An interaction with F-actin region spans residues 46–223; sequence RRLLPPNSSS…PAAALGQDRQ (178 aa). At Y161 the chain carries Phosphotyrosine. An interaction with CTNNB1 region spans residues 168 to 187; sequence RPISNVSRSSLGLSYYPTSS. 3 positions are modified to phosphoserine: S171, S174, and S176. A helical membrane pass occupies residues 224–244; sequence VPLWGQLLLFLVFAAFLLFVY.

Interacts with lamins A and C, BANF1, GMCL, BCLAF1 and YTHDC1/YT521. Interacts with TMEM43; the interaction retains emerin in the inner nuclear membrane. Interacts with ACTB, SPTAN1, F-actin, CTNNB1 and beta-tubulin. Interacts with SUN1 and SUN2. Interacts with TMEM201. Interacts with NEMP1. In the ovary, highest expression is seen in primordial follicle oocytes (at protein level). Detected in embryonic fibroblasts, skeletal muscle, heart muscle and tongue epithelium (at protein level). Widely expressed.

Its subcellular location is the nucleus inner membrane. The protein resides in the nucleus outer membrane. Functionally, stabilizes and promotes the formation of a nuclear actin cortical network. Stimulates actin polymerization in vitro by binding and stabilizing the pointed end of growing filaments. Inhibits beta-catenin activity by preventing its accumulation in the nucleus. Acts by influencing the nuclear accumulation of beta-catenin through a CRM1-dependent export pathway. Links centrosomes to the nuclear envelope via a microtubule association. Required for proper localization of non-farnesylated prelamin-A/C. Together with NEMP1, contributes to nuclear envelope stiffness in germ cells. In Mus musculus (Mouse), this protein is Emerin (Emd).